Reading from the N-terminus, the 291-residue chain is Nucleotide-binding protein CMM_1747 (291 aa).

ATP is bound at residue 15–22 (GMSGAGRS). Residue 66-69 (DVRG) participates in GTP binding.

The protein belongs to the RapZ-like family.

Displays ATPase and GTPase activities. In Clavibacter michiganensis subsp. michiganensis (strain NCPPB 382), this protein is Nucleotide-binding protein CMM_1747.